The following is a 465-amino-acid chain: SET domain-containing protein 3 (465 aa).

Residues 18–265 (DKVTVKWDKK…AREELLDSYG (248 aa)) form the SET domain.

It belongs to the class V-like SAM-binding methyltransferase superfamily.

This Caenorhabditis elegans protein is SET domain-containing protein 3 (set-3).